Here is a 74-residue protein sequence, read N- to C-terminus: uncharacterized protein (74 aa).

The signal sequence occupies residues 1 to 25 (MMMTDLPENIRKTAVALLRLGEATA).

This is an uncharacterized protein from Archaeoglobus fulgidus (strain ATCC 49558 / DSM 4304 / JCM 9628 / NBRC 100126 / VC-16).